Consider the following 384-residue polypeptide: Tetraacyldisaccharide 4'-kinase (384 aa).

An ATP-binding site is contributed by 72 to 79 (TAGGTGKT).

The protein belongs to the LpxK family.

It catalyses the reaction a lipid A disaccharide + ATP = a lipid IVA + ADP + H(+). It functions in the pathway glycolipid biosynthesis; lipid IV(A) biosynthesis; lipid IV(A) from (3R)-3-hydroxytetradecanoyl-[acyl-carrier-protein] and UDP-N-acetyl-alpha-D-glucosamine: step 6/6. Transfers the gamma-phosphate of ATP to the 4'-position of a tetraacyldisaccharide 1-phosphate intermediate (termed DS-1-P) to form tetraacyldisaccharide 1,4'-bis-phosphate (lipid IVA). The polypeptide is Tetraacyldisaccharide 4'-kinase (Halothermothrix orenii (strain H 168 / OCM 544 / DSM 9562)).